Reading from the N-terminus, the 1375-residue chain is DNA-directed RNA polymerase subunit beta (1375 aa).

Belongs to the RNA polymerase beta chain family. The RNAP catalytic core consists of 2 alpha, 1 beta, 1 beta' and 1 omega subunit. When a sigma factor is associated with the core the holoenzyme is formed, which can initiate transcription.

It carries out the reaction RNA(n) + a ribonucleoside 5'-triphosphate = RNA(n+1) + diphosphate. In terms of biological role, DNA-dependent RNA polymerase catalyzes the transcription of DNA into RNA using the four ribonucleoside triphosphates as substrates. The sequence is that of DNA-directed RNA polymerase subunit beta from Oleidesulfovibrio alaskensis (strain ATCC BAA-1058 / DSM 17464 / G20) (Desulfovibrio alaskensis).